We begin with the raw amino-acid sequence, 400 residues long: Enoyl-[acyl-carrier-protein] reductase [NADH] (400 aa).

NAD(+) is bound by residues 48–53 (GSSSGY), 74–75 (FE), 111–112 (DA), and 139–140 (LA). Tyr-225 contacts substrate. Tyr-235 (proton donor) is an active-site residue. Residues Lys-244 and 273–275 (VVT) each bind NAD(+).

The protein belongs to the TER reductase family. In terms of assembly, monomer.

It catalyses the reaction a 2,3-saturated acyl-[ACP] + NAD(+) = a (2E)-enoyl-[ACP] + NADH + H(+). It participates in lipid metabolism; fatty acid biosynthesis. Its function is as follows. Involved in the final reduction of the elongation cycle of fatty acid synthesis (FAS II). Catalyzes the reduction of a carbon-carbon double bond in an enoyl moiety that is covalently linked to an acyl carrier protein (ACP). This Shewanella woodyi (strain ATCC 51908 / MS32) protein is Enoyl-[acyl-carrier-protein] reductase [NADH].